The primary structure comprises 159 residues: Cytochrome c-type biogenesis protein CcmE (159 aa).

At 1–8 the chain is on the cytoplasmic side; that stretch reads MHPIRKKR. A helical; Signal-anchor for type II membrane protein transmembrane segment spans residues 9–29; that stretch reads LTIVLFLVAGIAIAVGLTTYA. Topologically, residues 30-159 are periplasmic; the sequence is LRQNINLFYD…VEKAAETTAY (130 aa). Residues His124 and Tyr128 each contribute to the heme site. The interval 135–159 is disordered; sequence EALERSSKGQHKSADVEKAAETTAY. The span at 136 to 159 shows a compositional bias: basic and acidic residues; that stretch reads ALERSSKGQHKSADVEKAAETTAY.

The protein belongs to the CcmE/CycJ family.

It is found in the cell inner membrane. Heme chaperone required for the biogenesis of c-type cytochromes. Transiently binds heme delivered by CcmC and transfers the heme to apo-cytochromes in a process facilitated by CcmF and CcmH. This chain is Cytochrome c-type biogenesis protein CcmE, found in Marinobacter nauticus (strain ATCC 700491 / DSM 11845 / VT8) (Marinobacter aquaeolei).